Here is a 209-residue protein sequence, read N- to C-terminus: Imidazole glycerol phosphate synthase subunit HisH (209 aa).

The 205-residue stretch at 1-205 (MIAIIDYGMG…KGVVEAWKSS (205 aa)) folds into the Glutamine amidotransferase type-1 domain. The active-site Nucleophile is Cys-79. Catalysis depends on residues His-180 and Glu-182.

Heterodimer of HisH and HisF.

The protein resides in the cytoplasm. The enzyme catalyses 5-[(5-phospho-1-deoxy-D-ribulos-1-ylimino)methylamino]-1-(5-phospho-beta-D-ribosyl)imidazole-4-carboxamide + L-glutamine = D-erythro-1-(imidazol-4-yl)glycerol 3-phosphate + 5-amino-1-(5-phospho-beta-D-ribosyl)imidazole-4-carboxamide + L-glutamate + H(+). The catalysed reaction is L-glutamine + H2O = L-glutamate + NH4(+). It participates in amino-acid biosynthesis; L-histidine biosynthesis; L-histidine from 5-phospho-alpha-D-ribose 1-diphosphate: step 5/9. IGPS catalyzes the conversion of PRFAR and glutamine to IGP, AICAR and glutamate. The HisH subunit catalyzes the hydrolysis of glutamine to glutamate and ammonia as part of the synthesis of IGP and AICAR. The resulting ammonia molecule is channeled to the active site of HisF. The chain is Imidazole glycerol phosphate synthase subunit HisH from Bacillus mycoides (strain KBAB4) (Bacillus weihenstephanensis).